The chain runs to 653 residues: Brain-enriched guanylate kinase-associated protein (653 aa).

Residue Tyr186 is modified to Phosphotyrosine. Residues 241-271 form a disordered region; sequence PGSLSSHLSEASAQDLGFPEGLEKPGSRPPY. Polar residues predominate over residues 243–252; it reads SLSSHLSEAS. Ser249, Ser278, Ser295, and Ser314 each carry phosphoserine. The interval 288–329 is disordered; the sequence is RHQDRRPSVEGPGSDVGFLQAQNSTDSTAEEEEEEEEDTEAG. Over residues 315 to 327 the composition is skewed to acidic residues; the sequence is TAEEEEEEEEDTE. 2 positions are modified to phosphoserine: Ser400 and Ser427. At Arg435 the chain carries Asymmetric dimethylarginine. Phosphoserine occurs at positions 523, 533, 535, 558, 560, 564, 613, and 623. The tract at residues 587 to 653 is disordered; sequence GASGSPEPEL…KAQLYGTLLN (67 aa).

Interacts with DLG4 and DLGAP1 and forms a ternary complex.

The protein resides in the cytoplasm. The protein localises to the membrane. In terms of biological role, may sustain the structure of the postsynaptic density (PSD). The chain is Brain-enriched guanylate kinase-associated protein (BEGAIN) from Ovis aries (Sheep).